Reading from the N-terminus, the 526-residue chain is Probable feruloyl esterase B-2 (526 aa).

The first 19 residues, 1 to 19 (MPSLRRLLPFLAAGSAALA), serve as a signal peptide directing secretion. 2 disulfides stabilise this stretch: cysteine 28-cysteine 75 and cysteine 63-cysteine 114. Residues asparagine 53, asparagine 85, asparagine 98, and asparagine 138 are each glycosylated (N-linked (GlcNAc...) asparagine). Cystine bridges form between cysteine 187-cysteine 441, cysteine 256-cysteine 273, and cysteine 282-cysteine 291. The active-site Acyl-ester intermediate is serine 188. N-linked (GlcNAc...) asparagine glycosylation is present at asparagine 246. Ca(2+) is bound by residues aspartate 257, aspartate 260, alanine 262, aspartate 264, and isoleucine 266. 2 N-linked (GlcNAc...) asparagine glycosylation sites follow: asparagine 287 and asparagine 311. Residues aspartate 400 and histidine 440 each act as charge relay system in the active site. 2 N-linked (GlcNAc...) asparagine glycosylation sites follow: asparagine 490 and asparagine 516. A disulfide bridge links cysteine 503 with cysteine 525.

This sequence belongs to the tannase family.

Its subcellular location is the secreted. The catalysed reaction is feruloyl-polysaccharide + H2O = ferulate + polysaccharide.. Functionally, involved in degradation of plant cell walls. Hydrolyzes the feruloyl-arabinose ester bond in arabinoxylans as well as the feruloyl-galactose and feruloyl-arabinose ester bonds in pectin. The protein is Probable feruloyl esterase B-2 (faeB-2) of Aspergillus oryzae (strain ATCC 42149 / RIB 40) (Yellow koji mold).